A 378-amino-acid chain; its full sequence is Chorismate synthase (378 aa).

Arg50 contributes to the NADP(+) binding site. FMN contacts are provided by residues 127–129 (RAS), 255–256 (NA), Gly300, 315–319 (KPTPS), and Arg342.

Belongs to the chorismate synthase family. The cofactor is FMNH2.

It catalyses the reaction 5-O-(1-carboxyvinyl)-3-phosphoshikimate = chorismate + phosphate. Its pathway is metabolic intermediate biosynthesis; chorismate biosynthesis; chorismate from D-erythrose 4-phosphate and phosphoenolpyruvate: step 7/7. Functionally, catalyzes the anti-1,4-elimination of the C-3 phosphate and the C-6 proR hydrogen from 5-enolpyruvylshikimate-3-phosphate (EPSP) to yield chorismate, which is the branch point compound that serves as the starting substrate for the three terminal pathways of aromatic amino acid biosynthesis. This reaction introduces a second double bond into the aromatic ring system. The protein is Chorismate synthase of Methanocaldococcus jannaschii (strain ATCC 43067 / DSM 2661 / JAL-1 / JCM 10045 / NBRC 100440) (Methanococcus jannaschii).